Consider the following 1282-residue polypeptide: Ribosome biogenesis protein BMS1 homolog (1282 aa).

Residues 1 to 24 (MEAKDQKKHRKKNSGPKAAKKKKR) show a composition bias toward basic residues. Positions 1–43 (MEAKDQKKHRKKNSGPKAAKKKKRLLQDLQLGDEEDARKRNPK) are disordered. A Glycyl lysine isopeptide (Lys-Gly) (interchain with G-Cter in SUMO2) cross-link involves residue lysine 43. The Bms1-type G domain occupies 80-245 (PPPIVVVVMG…GRFITVMKFR (166 aa)). The interval 89-96 (GPPKVGKS) is G1. 89 to 96 (GPPKVGKS) contributes to the ATP binding site. The G2 stretch occupies residues 117-121 (PVTIV). Residues 132 to 135 (ECGC) form a G3 region. The tract at residues 184–187 (THLD) is G4. The residue at position 188 (serine 188) is a Phosphoserine. A G5 region spans residues 219–228 (LSGMVHGEYQ). Disordered stretches follow at residues 397–557 (DSKP…ANCQ) and 575–667 (PTFD…ALKW). Glycyl lysine isopeptide (Lys-Gly) (interchain with G-Cter in SUMO2) cross-links involve residues lysine 399 and lysine 415. 2 stretches are compositionally biased toward acidic residues: residues 434–472 (GDEDESGDSDDEEDDEMSEDDGLENGSSDEEAEEEENAE) and 503–531 (DSDDDLERSSAEEGEAEEADESSEEEDCT). The span at 535–550 (KGISGSKAAGEGSKAG) shows a compositional bias: low complexity. Serine 552 is modified (phosphoserine). Acidic residues predominate over residues 588–610 (FASEDESEESSSLSAEEEDSENE). Phosphoserine occurs at positions 625 and 639. Lysine 646 participates in a covalent cross-link: Glycyl lysine isopeptide (Lys-Gly) (interchain with G-Cter in SUMO2). Positions 653–667 (EENNDSKETSGALKW) are enriched in basic and acidic residues. Residue threonine 708 is modified to Phosphothreonine. Disordered stretches follow at residues 787–822 (ETGDVHKGKSGPNTQNEDIEKEVKEEIDPDEEESAK) and 1178–1202 (NKPKTQAKAGKVPKDRRRPAVIREP). Lysine 810 is covalently cross-linked (Glycyl lysine isopeptide (Lys-Gly) (interchain with G-Cter in SUMO1); alternate). Lysine 810 is covalently cross-linked (Glycyl lysine isopeptide (Lys-Gly) (interchain with G-Cter in SUMO2); alternate). Lysine 1206 is covalently cross-linked (Glycyl lysine isopeptide (Lys-Gly) (interchain with G-Cter in SUMO2)). Residues 1219–1282 (SQKMKKAKEQ…SLKGAEGQLQ (64 aa)) form a disordered region. The span at 1228-1248 (QRHLHNKEHFRAKQKEEEEKL) shows a compositional bias: basic and acidic residues. Over residues 1249–1259 (KRQKDLRKKLF) the composition is skewed to basic residues.

This sequence belongs to the TRAFAC class translation factor GTPase superfamily. Bms1-like GTPase family. BMS1 subfamily. Part of the small subunit (SSU) processome, composed of more than 70 proteins and the RNA chaperone small nucleolar RNA (snoRNA) U3. Interacts with RCL1.

It is found in the nucleus. It localises to the nucleolus. The enzyme catalyses GTP + H2O = GDP + phosphate + H(+). Functionally, GTPase required for the synthesis of 40S ribosomal subunits and for processing of pre-ribosomal RNA (pre-rRNA) at sites A0, A1, and A2. Controls access of pre-rRNA intermediates to RCL1 during ribosome biogenesis by binding RCL1 in a GTP-dependent manner, and delivering it to pre-ribosomes. GTP-binding and/or GTP hydrolysis may induce conformational rearrangements within the BMS1-RCL1 complex allowing the interaction of RCL1 with its RNA substrate. Required for RCL1 import into the nucleus. The chain is Ribosome biogenesis protein BMS1 homolog from Homo sapiens (Human).